Reading from the N-terminus, the 90-residue chain is Co-chaperonin GroES (90 aa).

This sequence belongs to the GroES chaperonin family. In terms of assembly, heptamer of 7 subunits arranged in a ring. Interacts with the chaperonin GroEL.

Its subcellular location is the cytoplasm. Together with the chaperonin GroEL, plays an essential role in assisting protein folding. The GroEL-GroES system forms a nano-cage that allows encapsulation of the non-native substrate proteins and provides a physical environment optimized to promote and accelerate protein folding. GroES binds to the apical surface of the GroEL ring, thereby capping the opening of the GroEL channel. This Bacteroides fragilis (strain ATCC 25285 / DSM 2151 / CCUG 4856 / JCM 11019 / LMG 10263 / NCTC 9343 / Onslow / VPI 2553 / EN-2) protein is Co-chaperonin GroES.